The following is a 263-amino-acid chain: Histidine racemase (263 aa).

Cys-67 acts as the Proton acceptor in catalysis. Cys-209 acts as the Proton donor in catalysis.

It belongs to the histidine racemase family. In terms of assembly, homodimer.

The enzyme catalyses L-histidine = D-histidine. Functionally, cofactor-independent isomerase that catalyzes the reversible conversion of L-histidine to D-histidine. May play a role in growth of F.nucleatum. This is Histidine racemase from Fusobacterium nucleatum subsp. nucleatum (strain ATCC 23726 / VPI 4351).